The following is a 218-amino-acid chain: Protein N-lysine methyltransferase METTL21A (218 aa).

S-adenosyl-L-methionine-binding positions include W47, 73–75 (GAG), D94, W125, and A143.

The protein belongs to the methyltransferase superfamily. METTL21 family. Interacts with heat shock 70 family members; at least some of these proteins are methylation substrates.

It is found in the cytoplasm. The enzyme catalyses L-lysyl-[protein] + 3 S-adenosyl-L-methionine = N(6),N(6),N(6)-trimethyl-L-lysyl-[protein] + 3 S-adenosyl-L-homocysteine + 3 H(+). Protein-lysine methyltransferase that selectively trimethylates residues in heat shock protein 70 (HSP70) family members. Contributes to the in vivo trimethylation of Lys residues in HSPA1 and HSPA8. In vitro methylates 'Lys-561' in HSPA1, 'Lys-564' in HSPA2, 'Lys-585' in HSPA5, 'Lys-563' in HSPA6 and 'Lys-561' in HSPA8. The polypeptide is Protein N-lysine methyltransferase METTL21A (Mettl21A) (Mus musculus (Mouse)).